Reading from the N-terminus, the 53-residue chain is Metallothionein (53 aa).

It belongs to the metallothionein superfamily. Type 14 family.

This protein complexes cadmium, zinc and copper. This Synechococcus sp protein is Metallothionein.